The following is a 574-amino-acid chain: Frizzled-7 (574 aa).

A signal peptide spans 1-32 (MRDPGAAAPLSSLGLCALVLALLGALSAGAGA). Residues 33 to 256 (QPYHGEKGIS…EEERRFARLW (224 aa)) lie on the Extracellular side of the membrane. The FZ domain occupies 44–163 (PDHGFCQPIS…HGAGEICVGQ (120 aa)). 5 disulfide bridges follow: Cys49/Cys110, Cys57/Cys103, Cys94/Cys131, Cys120/Cys160, and Cys124/Cys148. A glycan (N-linked (GlcNAc...) asparagine) is linked at Asn63. An N-linked (GlcNAc...) asparagine glycan is attached at Asn164. A helical membrane pass occupies residues 257–277 (VGVWSVLCCASTLFTVLTYLV). At 278–288 (DMRRFSYPERP) the chain is on the cytoplasmic side. A helical transmembrane segment spans residues 289 to 309 (IIFLSGCYFMVAVAHVAGFLL). Residues 310–336 (EDRAVCVERFSDDGYRTVAQGTKKEGC) are Extracellular-facing. The chain crosses the membrane as a helical span at residues 337-357 (TILFMVLYFFGMASSIWWVIL). Topologically, residues 358–379 (SLTWFLAAGMKWGHEAIEANSQ) are cytoplasmic. A helical transmembrane segment spans residues 380-400 (YFHLAAWAVPAVKTITILAMG). At 401-423 (QVDGDLLSGVCYVGLSSVDALRG) the chain is on the extracellular side. Residues 424–444 (FVLAPLFVYLFIGTSFLLAGF) traverse the membrane as a helical segment. Residues 445–470 (VSLFRIRTIMKHDGTKTEKLEKLMVR) are Cytoplasmic-facing. A helical membrane pass occupies residues 471 to 491 (IGVFSVLYTVPATIVLACYFY). Topologically, residues 492–528 (EQAFREHWERTWLLQTCKSYAVPCPPGHFPPMSPDFT) are extracellular. The helical transmembrane segment at 529–549 (VFMIKYLMTMIVGITTGFWIW) threads the bilayer. At 550 to 574 (SGKTLQSWRRFYHRLSHSSKGETAV) the chain is on the cytoplasmic side. Residues 552-557 (KTLQSW) carry the Lys-Thr-X-X-X-Trp motif, mediates interaction with the PDZ domain of Dvl family members motif. Positions 572–574 (TAV) match the PDZ-binding motif.

This sequence belongs to the G-protein coupled receptor Fz/Smo family. As to quaternary structure, interacts with MAGI3. Interacts with DVL1. Interacts with CCDC88C/DAPLE; the interaction displaces DVL1 from FZD7, leading to inhibition of canonical Wnt signaling and triggering of non-canonical Wnt responses. Interacts with MYOC. Binds to SDCBP; this interaction is increased by inositol trisphosphate (IP3). Interacts with glypican GPC3. (Microbial infection) Interacts with C.difficile toxin TcdB; frizzled receptors constitute the major host receptors for TcdB in the colonic epithelium. In terms of processing, ubiquitinated by ZNRF3, leading to its degradation by the proteasome. As to expression, high expression in adult skeletal muscle and fetal kidney, followed by fetal lung, adult heart, brain, and placenta. Specifically expressed in squamous cell esophageal carcinomas.

The protein localises to the cell membrane. It localises to the endosome membrane. Receptor for Wnt proteins. Most frizzled receptors are coupled to the beta-catenin canonical signaling pathway, which leads to the activation of disheveled proteins, inhibition of GSK-3 kinase, nuclear accumulation of beta-catenin and activation of Wnt target genes. A second signaling pathway involving PKC and calcium fluxes has been seen for some family members, but it is not yet clear if it represents a distinct pathway or if it can be integrated in the canonical pathway, as PKC seems to be required for Wnt-mediated inactivation of GSK-3 kinase. Both pathways seem to involve interactions with G-proteins. Activation by WNT8 induces expression of beta-catenin target genes. Following ligand activation, binds to CCDC88C/DAPLE which displaces DVL1 from FZD7 and leads to inhibition of canonical Wnt signaling, activation of G-proteins by CCDC88C and triggering of non-canonical Wnt responses. May be involved in transduction and intercellular transmission of polarity information during tissue morphogenesis and/or in differentiated tissues. Functionally, (Microbial infection) Acts as a receptor for C.difficile toxin TcdB in the colonic epithelium. The chain is Frizzled-7 (FZD7) from Homo sapiens (Human).